Reading from the N-terminus, the 218-residue chain is Copper acquisition factor BIM1 (218 aa).

Residues 1–19 (MFALKFILITSFIASTALA) form the signal peptide. Cu(2+)-binding residues include His20 and His65. Cystine bridges form between Cys40/Cys144 and Cys110/Cys161. N-linked (GlcNAc...) asparagine glycosylation is found at Asn87, Asn91, and Asn124. Asp138 contributes to the Cu(2+) binding site. 2 N-linked (GlcNAc...) asparagine glycosylation sites follow: Asn158 and Asn170. The segment at 160–194 (TCTDDASRTSNASSTSSGSATATSAAATSSSSGTS) is disordered. The segment covering 167–194 (RTSNASSTSSGSATATSAAATSSSSGTS) has biased composition (low complexity). Ser190 carries GPI-anchor amidated serine lipidation. Residues 191–218 (SGTSGAIKEVVGLGALSLALGIAGLIIL) constitute a propeptide, removed in mature form.

It belongs to the X325 family. Requires Cu(2+) as cofactor.

The protein resides in the cell membrane. Its function is as follows. Lytic polysaccharide monooxygenase-like protein that has diverged to biological functions other than polysaccharide degradation since it does not perform oxidative cleavage of polysaccharides. Cell surface-bound protein that functions in the copper-accumulation pathway shared by the CUF1-dependent copper transporter CTR1. Involved in maintaining cell wall integrity during copper deficiency. Binds Cu(2+) with an estimated 1:1 stoichiometry and might serve as an extracellular copper ligand. FRE4 and FRE7 metalloreductases probably function together with CTR1 and BIM1 to liberate the Cu(2+) bound to the BIM1 copper-binding site for subsequent import of Cu(+) into the cell by CTR1, via the reduction of BIM1-bound Cu(2+) to Cu(+) to reduce binding affinity for BIM1 but increase affinity for CTR1. Facilitates copper acquisition in the brain of mammalian hosts and acts as a copper-dependent virulence trait in fungal meningitis. While BIM1 plays a critical role in cryptococcal meningitis, at least in part through its role in copper acquisition, it could play additional roles during copper limitation or as a means to invade and colonize host tissues in the brain, by compromising host carbohydrate integrity via its lytic polysaccharide monooxygenase (LPMO) activity, which has still to be determined. The protein is Copper acquisition factor BIM1 of Cryptococcus neoformans var. neoformans serotype D (strain JEC21 / ATCC MYA-565) (Filobasidiella neoformans).